Reading from the N-terminus, the 71-residue chain is MASNNTASIAQARKLVEQLKMEANIDRIKVSKAAADLMAYCEAHAKEDPLLTPVPASENPFREKKFFCAIL.

At alanine 2 the chain carries N-acetylalanine. Cysteine 68 carries the cysteine methyl ester modification. A lipid anchor (S-geranylgeranyl cysteine) is attached at cysteine 68. Positions 69 to 71 (AIL) are cleaved as a propeptide — removed in mature form.

This sequence belongs to the G protein gamma family. As to quaternary structure, g proteins are composed of 3 units, alpha, beta and gamma. In this context, interacts with GNB2. The heterodimer formed by GNB1 and GNG2 interacts with ARHGEF5. The heterodimer formed by GNB1 and GNG2 interacts with GRK2. Component of the TAS2R14-GNAI1 complex, consisting of TAS2R14, GNAI1, GNB1 and GNG2. Forms complexes with TAS2R14 and G-proteins; these complexes play a role in the perception of bitterness. Component of the TAS2R14-GNAT3 complex, consisting of TAS2R14, GNAT3, GNB1 and GNG2. Component of the TAS2R14-GNAS2 complex, consisting of TAS2R14, GNAS2, GNB1 and GNG2. In terms of tissue distribution, adrenal gland and brain.

It localises to the cell membrane. Its function is as follows. Guanine nucleotide-binding proteins (G proteins) are involved as a modulator or transducer in various transmembrane signaling systems. The beta and gamma chains are required for the GTPase activity, for replacement of GDP by GTP, and for G protein-effector interaction. This is Guanine nucleotide-binding protein G(I)/G(S)/G(O) subunit gamma-2 (GNG2) from Bos taurus (Bovine).